Here is a 493-residue protein sequence, read N- to C-terminus: Isoniazid-induced protein IniC (493 aa).

This Mycobacterium tuberculosis (strain CDC 1551 / Oshkosh) protein is Isoniazid-induced protein IniC (iniC).